Consider the following 72-residue polypeptide: NAD(P)H-quinone oxidoreductase subunit O (72 aa).

Belongs to the complex I NdhO subunit family. In terms of assembly, NDH-1 can be composed of about 15 different subunits; different subcomplexes with different compositions have been identified which probably have different functions.

It is found in the cellular thylakoid membrane. The enzyme catalyses a plastoquinone + NADH + (n+1) H(+)(in) = a plastoquinol + NAD(+) + n H(+)(out). It catalyses the reaction a plastoquinone + NADPH + (n+1) H(+)(in) = a plastoquinol + NADP(+) + n H(+)(out). In terms of biological role, NDH-1 shuttles electrons from an unknown electron donor, via FMN and iron-sulfur (Fe-S) centers, to quinones in the respiratory and/or the photosynthetic chain. The immediate electron acceptor for the enzyme in this species is believed to be plastoquinone. Couples the redox reaction to proton translocation, and thus conserves the redox energy in a proton gradient. Cyanobacterial NDH-1 also plays a role in inorganic carbon-concentration. This is NAD(P)H-quinone oxidoreductase subunit O from Rippkaea orientalis (strain PCC 8801 / RF-1) (Cyanothece sp. (strain PCC 8801)).